A 79-amino-acid polypeptide reads, in one-letter code: UPF0337 protein YhjA (79 aa).

The interval 1 to 30 is disordered; it reads MALNDKLDATKDKVSGKVKETTGKVTGDEK.

This sequence belongs to the UPF0337 (CsbD) family.

The protein is UPF0337 protein YhjA (yhjA) of Lactococcus lactis subsp. lactis (strain IL1403) (Streptococcus lactis).